The following is a 107-amino-acid chain: Metallothionein-1 (107 aa).

The propeptide occupies 1–2 (MD).

The protein belongs to the metallothionein superfamily. Type 7 family.

In terms of biological role, the metallothioneins are involved in the cellular sequestration of toxic metal ions. Binds 12 cadmium ions per molecule. The protein is Metallothionein-1 of Tetrahymena pigmentosa.